The sequence spans 459 residues: Bifunctional protein GlmU (459 aa).

The pyrophosphorylase stretch occupies residues 1–229 (MSNFAIILAA…FDESLGVNDR (229 aa)). UDP-N-acetyl-alpha-D-glucosamine contacts are provided by residues 8-11 (LAAG), Lys22, Gln72, and 77-78 (GT). Mg(2+) is bound at residue Asp102. Gly139, Glu154, Asn169, and Asn227 together coordinate UDP-N-acetyl-alpha-D-glucosamine. Asn227 contributes to the Mg(2+) binding site. Positions 230-250 (VALATAESVMRRRINHKHMVN) are linker. Positions 251-459 (GVSFVNPEAT…TRLPHHPKNQ (209 aa)) are N-acetyltransferase. Residues Arg332 and Lys350 each contribute to the UDP-N-acetyl-alpha-D-glucosamine site. The Proton acceptor role is filled by His362. Tyr365 and Asn376 together coordinate UDP-N-acetyl-alpha-D-glucosamine. Residues Ala379, 385–386 (NY), Ser404, Ala422, and Arg439 each bind acetyl-CoA.

In the N-terminal section; belongs to the N-acetylglucosamine-1-phosphate uridyltransferase family. It in the C-terminal section; belongs to the transferase hexapeptide repeat family. In terms of assembly, homotrimer. The cofactor is Mg(2+).

The protein localises to the cytoplasm. It carries out the reaction alpha-D-glucosamine 1-phosphate + acetyl-CoA = N-acetyl-alpha-D-glucosamine 1-phosphate + CoA + H(+). It catalyses the reaction N-acetyl-alpha-D-glucosamine 1-phosphate + UTP + H(+) = UDP-N-acetyl-alpha-D-glucosamine + diphosphate. It functions in the pathway nucleotide-sugar biosynthesis; UDP-N-acetyl-alpha-D-glucosamine biosynthesis; N-acetyl-alpha-D-glucosamine 1-phosphate from alpha-D-glucosamine 6-phosphate (route II): step 2/2. The protein operates within nucleotide-sugar biosynthesis; UDP-N-acetyl-alpha-D-glucosamine biosynthesis; UDP-N-acetyl-alpha-D-glucosamine from N-acetyl-alpha-D-glucosamine 1-phosphate: step 1/1. Its pathway is bacterial outer membrane biogenesis; LPS lipid A biosynthesis. Its function is as follows. Catalyzes the last two sequential reactions in the de novo biosynthetic pathway for UDP-N-acetylglucosamine (UDP-GlcNAc). The C-terminal domain catalyzes the transfer of acetyl group from acetyl coenzyme A to glucosamine-1-phosphate (GlcN-1-P) to produce N-acetylglucosamine-1-phosphate (GlcNAc-1-P), which is converted into UDP-GlcNAc by the transfer of uridine 5-monophosphate (from uridine 5-triphosphate), a reaction catalyzed by the N-terminal domain. The polypeptide is Bifunctional protein GlmU (Streptococcus pneumoniae (strain Hungary19A-6)).